A 150-amino-acid chain; its full sequence is Protein E6 (150 aa).

Zinc fingers lie at residues 31–67 (CVFCRKTLSTAEVYAFQYKSLYIVWRGQFPFAACACC) and 104–140 (CYLCHKPLCEVEKLRHILQKARFIKLNSSWKGRCFHC).

The protein belongs to the papillomaviridae E6 protein family. Forms homodimers. Interacts with ubiquitin-protein ligase UBE3A/E6-AP; this interaction stimulates UBE3A ubiquitin activity. Interacts with host TP53 and EP300; this interaction inhibits TP53 activity.

The protein resides in the host cytoplasm. It is found in the host nucleus. In terms of biological role, plays a major role in the induction and maintenance of cellular transformation. E6 associates with host UBE3A/E6-AP ubiquitin-protein ligase and modulates its activity. Sequesters tumor suppressor TP53 in the host cytoplasm and modulates its activity by interacting with host EP300 that results in the reduction of TP53 acetylation and activation. In turn, apoptosis induced by DNA damage is inhibited. E6 also protects host keratinocytes from apoptosis by mediating the degradation of host BAK1. May also inhibit host immune response. This Human papillomavirus 13 protein is Protein E6.